A 351-amino-acid polypeptide reads, in one-letter code: UDP-3-O-acylglucosamine N-acyltransferase (351 aa).

The Proton acceptor role is filled by His257.

Belongs to the transferase hexapeptide repeat family. LpxD subfamily. As to quaternary structure, homotrimer.

The catalysed reaction is a UDP-3-O-[(3R)-3-hydroxyacyl]-alpha-D-glucosamine + a (3R)-hydroxyacyl-[ACP] = a UDP-2-N,3-O-bis[(3R)-3-hydroxyacyl]-alpha-D-glucosamine + holo-[ACP] + H(+). The protein operates within bacterial outer membrane biogenesis; LPS lipid A biosynthesis. Functionally, catalyzes the N-acylation of UDP-3-O-acylglucosamine using 3-hydroxyacyl-ACP as the acyl donor. Is involved in the biosynthesis of lipid A, a phosphorylated glycolipid that anchors the lipopolysaccharide to the outer membrane of the cell. In Methylorubrum extorquens (strain PA1) (Methylobacterium extorquens), this protein is UDP-3-O-acylglucosamine N-acyltransferase.